The sequence spans 549 residues: Teichoic acids export ATP-binding protein TagH (549 aa).

The 222-residue stretch at Asp-22 to Gln-243 folds into the ABC transporter domain. Gly-57–Ser-64 is a binding site for ATP. Positions Met-244–Lys-549 are unknown. Positions Ala-346 to Lys-415 constitute an SH3b domain.

The protein belongs to the ABC transporter superfamily. Teichoic acids exporter (TC 3.A.1.104.1) family. The complex is composed of two ATP-binding proteins (TagH) and two transmembrane proteins (TagG).

It localises to the cell membrane. The catalysed reaction is ATP + H2O + teichoic acidSide 1 = ADP + phosphate + teichoic acidSide 2.. Its function is as follows. Part of the ABC transporter complex TagGH involved in teichoic acids export. Responsible for energy coupling to the transport system. The sequence is that of Teichoic acids export ATP-binding protein TagH from Bacillus anthracis.